The primary structure comprises 306 residues: Bifunctional protein FolD (306 aa).

NADP(+) is bound by residues 166-168 (GRS) and isoleucine 232.

It belongs to the tetrahydrofolate dehydrogenase/cyclohydrolase family. In terms of assembly, homodimer.

The catalysed reaction is (6R)-5,10-methylene-5,6,7,8-tetrahydrofolate + NADP(+) = (6R)-5,10-methenyltetrahydrofolate + NADPH. It catalyses the reaction (6R)-5,10-methenyltetrahydrofolate + H2O = (6R)-10-formyltetrahydrofolate + H(+). It functions in the pathway one-carbon metabolism; tetrahydrofolate interconversion. Catalyzes the oxidation of 5,10-methylenetetrahydrofolate to 5,10-methenyltetrahydrofolate and then the hydrolysis of 5,10-methenyltetrahydrofolate to 10-formyltetrahydrofolate. The protein is Bifunctional protein FolD of Methylorubrum extorquens (strain CM4 / NCIMB 13688) (Methylobacterium extorquens).